Reading from the N-terminus, the 274-residue chain is Large ribosomal subunit protein uL2 (274 aa).

A disordered region spans residues M225–K274. Residues K257–K274 are compositionally biased toward basic residues.

The protein belongs to the universal ribosomal protein uL2 family. Part of the 50S ribosomal subunit. Forms a bridge to the 30S subunit in the 70S ribosome.

Functionally, one of the primary rRNA binding proteins. Required for association of the 30S and 50S subunits to form the 70S ribosome, for tRNA binding and peptide bond formation. It has been suggested to have peptidyltransferase activity; this is somewhat controversial. Makes several contacts with the 16S rRNA in the 70S ribosome. The protein is Large ribosomal subunit protein uL2 of Carboxydothermus hydrogenoformans (strain ATCC BAA-161 / DSM 6008 / Z-2901).